The chain runs to 248 residues: Delayed minus-nitrogen induction protein 2 (248 aa).

Helical transmembrane passes span 26–46, 110–130, 144–164, and 186–206; these read IFSN…CCSC, VHPV…VLTI, ISCL…MALA, and GVAA…FSLI.

The protein belongs to the SUR7 family.

It localises to the membrane. The sequence is that of Delayed minus-nitrogen induction protein 2 (dni2) from Schizosaccharomyces pombe (strain 972 / ATCC 24843) (Fission yeast).